Reading from the N-terminus, the 466-residue chain is cGMP-specific 3',5'-cGMP phosphodiesterase 3 (466 aa).

Residues 1 to 120 (MAPQQNIMKQ…NSNNNNSNNN (120 aa)) show a composition bias toward low complexity. The disordered stretch occupies residues 1–150 (MAPQQNIMKQ…NNNKIRGYND (150 aa)). Residues 123-134 (DDEEEEGDDEDN) show a composition bias toward acidic residues. Residues 135–150 (NNNNNSNNNKIRGYND) show a composition bias toward low complexity. Residues 137 to 458 (NNNSNNNKIR…EIWSNNGSSS (322 aa)) enclose the PDEase domain. Histidine 213 acts as the Proton donor in catalysis. A divalent metal cation contacts are provided by histidine 217, histidine 253, aspartate 254, and aspartate 364.

This sequence belongs to the cyclic nucleotide phosphodiesterase family. A divalent metal cation serves as cofactor.

The protein resides in the cytoplasm. It is found in the cytosol. It catalyses the reaction 3',5'-cyclic GMP + H2O = GMP + H(+). Its activity is regulated as follows. Inhibited by 3-isobutyl-1-methylxanthine (IBMX). Functionally, phosphodiesterase specific for cGMP, which is not activated by cGMP. Involved in the degradation of intracellular cGMP. The sequence is that of cGMP-specific 3',5'-cGMP phosphodiesterase 3 (pde3) from Dictyostelium discoideum (Social amoeba).